A 395-amino-acid polypeptide reads, in one-letter code: uncharacterized protein (395 aa).

Disordered regions lie at residues 185-282 (RREV…SSTA) and 316-372 (GSST…TCSS). A compositionally biased stretch (basic residues) spans 248–257 (LHLRTRHPHR). Residues 342 to 360 (ARASTHSRSSPSASANSRY) show a composition bias toward low complexity.

This is an uncharacterized protein from Streptomyces fradiae (Streptomyces roseoflavus).